Consider the following 373-residue polypeptide: UDP-sugar transporter UST74c (373 aa).

The tract at residues 27–49 (LEEKMGGSADRSSLLDGSGSKEL) is disordered. Ser-50 is subject to Phosphoserine. The next 8 helical transmembrane spans lie at 89 to 111 (HFPSFLFLSLGQLTASIVVLGMG), 131 to 153 (FPLPLIFLGNMMFGLGGTKTLSL), 174 to 196 (ILGLRPSNAVQVSVYAMIGGALL), 206 to 225 (MRGYIYVMITNALTASNGVY), 238 to 260 (YGLMYYNSLFMFLPALALNYVTG), 275 to 297 (VFVVQFLLSCVMGFILSYSTILC), 302 to 324 (SALTTTIVGCLKNICVTYLGMFI), and 329 to 351 (VFSWLNCIGINISVLASLLYTYV).

It belongs to the TPT transporter family. SLC35D subfamily.

It is found in the golgi apparatus membrane. In terms of biological role, involved in the import of UDP-sugars from the cytoplasm into the Golgi lumen. This Drosophila melanogaster (Fruit fly) protein is UDP-sugar transporter UST74c (frc).